We begin with the raw amino-acid sequence, 577 residues long: Beta-glucosidase 30 (577 aa).

The N-terminal stretch at 1–23 (MAKGSWFFIILFIISMLENMINS) is a signal peptide. A beta-D-glucoside contacts are provided by residues Gln-45, His-148, and 193-194 (NE). The active-site Proton donor is Glu-194. Cysteines 213 and 221 form a disulfide. Asn-328 is a glycosylation site (N-linked (GlcNAc...) asparagine). Tyr-338 lines the a beta-D-glucoside pocket. Asn-368 carries N-linked (GlcNAc...) asparagine glycosylation. A beta-D-glucoside-binding positions include Glu-410, Trp-460, 467–468 (EW), and Phe-476. The active-site Nucleophile is the Glu-410. 2 N-linked (GlcNAc...) asparagine glycosylation sites follow: Asn-524 and Asn-544.

Belongs to the glycosyl hydrolase 1 family.

It catalyses the reaction Hydrolysis of terminal, non-reducing beta-D-glucosyl residues with release of beta-D-glucose.. In Arabidopsis thaliana (Mouse-ear cress), this protein is Beta-glucosidase 30.